The following is a 258-amino-acid chain: Glutamate racemase (258 aa).

Substrate is bound by residues 11–12 (DS) and 43–44 (YG). C74 acts as the Proton donor/acceptor in catalysis. Residue 75–76 (NT) coordinates substrate. The active-site Proton donor/acceptor is the C187. 188–189 (TH) contributes to the substrate binding site.

It belongs to the aspartate/glutamate racemases family.

The catalysed reaction is L-glutamate = D-glutamate. The protein operates within cell wall biogenesis; peptidoglycan biosynthesis. Provides the (R)-glutamate required for cell wall biosynthesis. This is Glutamate racemase from Bifidobacterium adolescentis (strain ATCC 15703 / DSM 20083 / NCTC 11814 / E194a).